We begin with the raw amino-acid sequence, 171 residues long: Protein-export protein SecB (171 aa).

Belongs to the SecB family. In terms of assembly, homotetramer, a dimer of dimers. One homotetramer interacts with 1 SecA dimer.

It localises to the cytoplasm. One of the proteins required for the normal export of preproteins out of the cell cytoplasm. It is a molecular chaperone that binds to a subset of precursor proteins, maintaining them in a translocation-competent state. It also specifically binds to its receptor SecA. The chain is Protein-export protein SecB from Histophilus somni (strain 2336) (Haemophilus somnus).